The primary structure comprises 49 residues: Chitin-binding lectin (49 aa).

The Chitin-binding type-1 domain maps to 2–45 (DHRCGREATPPGKLCNDGRCCSQWGWCGTTQAYCSGKCQSQCDC). 4 cysteine pairs are disulfide-bonded: cysteine 5–cysteine 22, cysteine 16–cysteine 28, cysteine 21–cysteine 35, and cysteine 39–cysteine 43.

In terms of assembly, homodimer; disulfide-linked.

Chitin-binding lectin which is specific for N-acetylglucosamine oligomers. The sequence is that of Chitin-binding lectin from Viscum album (European mistletoe).